The following is a 312-amino-acid chain: Probable deoxyhypusine synthase (312 aa).

K285 acts as the Nucleophile in catalysis.

This sequence belongs to the deoxyhypusine synthase family. NAD(+) is required as a cofactor.

It catalyses the reaction [eIF5A protein]-L-lysine + spermidine = [eIF5A protein]-deoxyhypusine + propane-1,3-diamine. It participates in protein modification; eIF5A hypusination. Functionally, catalyzes the NAD-dependent oxidative cleavage of spermidine and the subsequent transfer of the butylamine moiety of spermidine to the epsilon-amino group of a specific lysine residue of the eIF-5A precursor protein to form the intermediate deoxyhypusine residue. This Saccharolobus islandicus (strain Y.N.15.51 / Yellowstone #2) (Sulfolobus islandicus) protein is Probable deoxyhypusine synthase.